The primary structure comprises 503 residues: Probable cytosol aminopeptidase (503 aa).

The Mn(2+) site is built by K268 and D273. The active site involves K280. Mn(2+) contacts are provided by D291, D350, and E352. The active site involves R354.

This sequence belongs to the peptidase M17 family. Requires Mn(2+) as cofactor.

It is found in the cytoplasm. It carries out the reaction Release of an N-terminal amino acid, Xaa-|-Yaa-, in which Xaa is preferably Leu, but may be other amino acids including Pro although not Arg or Lys, and Yaa may be Pro. Amino acid amides and methyl esters are also readily hydrolyzed, but rates on arylamides are exceedingly low.. It catalyses the reaction Release of an N-terminal amino acid, preferentially leucine, but not glutamic or aspartic acids.. Functionally, presumably involved in the processing and regular turnover of intracellular proteins. Catalyzes the removal of unsubstituted N-terminal amino acids from various peptides. In Methylobacterium radiotolerans (strain ATCC 27329 / DSM 1819 / JCM 2831 / NBRC 15690 / NCIMB 10815 / 0-1), this protein is Probable cytosol aminopeptidase.